The chain runs to 67 residues: Small ribosomal subunit protein bS21 (67 aa).

Belongs to the bacterial ribosomal protein bS21 family.

The sequence is that of Small ribosomal subunit protein bS21 from Hydrogenobaculum sp. (strain Y04AAS1).